We begin with the raw amino-acid sequence, 257 residues long: Pyridoxal phosphate homeostasis protein (257 aa).

The residue at position 2 (S2) is an N-acetylserine. Position 49 is an N6-(pyridoxal phosphate)lysine (K49).

The protein belongs to the pyridoxal phosphate-binding protein YggS/PROSC family.

It is found in the cytoplasm. The protein resides in the nucleus. Functionally, pyridoxal 5'-phosphate (PLP)-binding protein, which may be involved in intracellular homeostatic regulation of pyridoxal 5'-phosphate (PLP), the active form of vitamin B6. In Saccharomyces cerevisiae (strain ATCC 204508 / S288c) (Baker's yeast), this protein is Pyridoxal phosphate homeostasis protein.